A 3343-amino-acid polypeptide reads, in one-letter code: Breast cancer type 2 susceptibility protein homolog (3343 aa).

The segment at 1-40 is interaction with PALB2; that stretch reads MTVEYKRRPTFWEIFKARCSTADLGPISLNWFEELFSEAP. A disordered region spans residues 40–60; it reads PPYNTEHPEESEYKPQGHEPQ. Basic and acidic residues predominate over residues 45–56; it reads EHPEESEYKPQG. Phosphoserine is present on S70. The segment at 348-381 is disordered; it reads IEPRDSEPLDPSVTNQKPLYSQSGDISSEAGQCS. The segment covering 359 to 381 has biased composition (polar residues); sequence SVTNQKPLYSQSGDISSEAGQCS. Phosphoserine is present on residues S475 and S736. Positions 622–982 are interaction with NPM1; that stretch reads PDSSIKRSNL…DKWSEFLDPL (361 aa). BRCA2 repeat units follow at residues 984-1018, 1197-1231, 1405-1439, 1503-1537, 1645-1669, 1828-1845, 1939-1973, and 2019-2053; these read NHKL…DIEE, KEME…DIEN, MKEF…QETE, KEPT…ETQY, CYTG…WLRE, FITT…IFTD, PSRT…EIDG, and SSFV…EFDL. The interval 985–2050 is interaction with RAD51; the sequence is HKLGGSFRTA…LHKVKGMLEE (1066 aa). Disordered stretches follow at residues 2059-2138, 2297-2356, and 2377-2407; these read TLQH…VLGT, PFCS…SDKS, and DSKN…PQFN. S2063 carries the phosphoserine modification. 2 stretches are compositionally biased toward polar residues: residues 2083–2094 and 2101–2125; these read PEYSVSSKLQKT and SPSN…QLSQ. Residues 2233 to 2300 form an interaction with HSF2BP region; that stretch reads RKRGGMAGVA…EPVTCGPFCS (68 aa). Composition is skewed to polar residues over residues 2307 to 2320 and 2332 to 2342; these read TQSP…QGLQ and GKSSSNPTVSA. The tract at residues 2313–2475 is interaction with FANCD2; the sequence is TSPAQGLQSK…SPKQLYMYGV (163 aa). Residues 2344-2356 show a composition bias toward basic and acidic residues; it reads RSERTRHSVSDKS. Residues 2411-2762 are interaction with SEM1; that stretch reads MSSLQNARDL…QRVYPLQWVE (352 aa). A Nuclear export signal; masked by interaction with SEM1 motif is present at residues 2612–2628; sequence AAKTLVLCVSDIISLST. A disordered region spans residues 3114-3163; sequence DSPKWSTPNKDPTREPYPASTCSASDLASGGQLPRSSPTDQQSYRSPLSC. Polar residues predominate over residues 3147–3163; that stretch reads PRSSPTDQQSYRSPLSC. Residue S3222 is modified to Phosphoserine; by CDK1 and CDK2. 2 disordered regions span residues 3231 to 3255 and 3289 to 3343; these read PPRS…WSRA and VGGS…PDYS. The residue at position 3250 (S3250) is a Phosphoserine. A compositionally biased stretch (polar residues) spans 3295–3310; that stretch reads VFPSDSTRTEGPSAST. A compositionally biased stretch (basic and acidic residues) spans 3318 to 3334; it reads SKRESLRDCRDDSDGKL.

In terms of assembly, monomer and dimer. Interacts with RAD51; regulates RAD51 recruitment and function at sites of DNA repair. Interacts with SEM1, WDR16, USP11, DMC1, ROCK2 and NPM1. Interacts with both nonubiquitinated and monoubiquitinated FANCD2; this complex also includes XRCC3 and phosphorylated FANCG. Part of a BRCA complex containing BRCA1, BRCA2 and PALB2. Component of the homologous recombination repair (HR) complex composed of ERCC5/XPG, BRCA2, PALB2, DSS1 and RAD51. Within the complex, interacts with ERCC5/XPG and PALB2. Interacts directly with PALB2 which may serve as a scaffold for a HR complex containing PALB2, BRCA2, RAD51C, RAD51 and XRCC3. Interacts with BRCA1 only in the presence of PALB2 which serves as the bridging protein. Interacts with POLH; the interaction is direct. Interacts with the TREX-2 complex subunits PCID2 and SEM1. Interacts with HSF2BP and BRME1; the interaction with HSF2BP is direct and allows the formation of a ternary complex. The complex BRME1:HSF2BP:BRCA2 interacts with SPATA22, MEIOB and RAD51. In terms of processing, phosphorylated by ATM upon irradiation-induced DNA damage. Phosphorylation by CHEK1 and CHEK2 regulates interaction with RAD51. Phosphorylation at Ser-3222 by CDK1 and CDK2 is low in S phase when recombination is active, but increases as cells progress towards mitosis; this phosphorylation prevents homologous recombination-dependent repair during S phase and G2 by inhibiting RAD51 binding. Post-translationally, ubiquitinated in the absence of DNA damage; this does not lead to proteasomal degradation. In contrast, ubiquitination in response to DNA damage leads to proteasomal degradation. Highest expression in testis. Also expressed in spleen, skeletal muscle, thymus, mammary gland, heart, ovary, prostate, liver, lung, kidney and brain.

The protein resides in the nucleus. It is found in the cytoplasm. Its subcellular location is the cytoskeleton. It localises to the microtubule organizing center. The protein localises to the centrosome. In terms of biological role, involved in double-strand break repair and/or homologous recombination. Binds RAD51 and potentiates recombinational DNA repair by promoting assembly of RAD51 onto single-stranded DNA (ssDNA). Acts by targeting RAD51 to ssDNA over double-stranded DNA, enabling RAD51 to displace replication protein-A (RPA) from ssDNA and stabilizing RAD51-ssDNA filaments by blocking ATP hydrolysis. Part of a PALB2-scaffolded HR complex containing RAD51C and which is thought to play a role in DNA repair by HR. May participate in S phase checkpoint activation. Binds selectively to ssDNA, and to ssDNA in tailed duplexes and replication fork structures. May play a role in the extension step after strand invasion at replication-dependent DNA double-strand breaks; together with PALB2 is involved in both POLH localization at collapsed replication forks and DNA polymerization activity. In concert with NPM1, regulates centrosome duplication. Interacts with the TREX-2 complex (transcription and export complex 2) subunits PCID2 and SEM1, and is required to prevent R-loop-associated DNA damage and thus transcription-associated genomic instability, independently of its known role in homologous recombination. The chain is Breast cancer type 2 susceptibility protein homolog from Rattus norvegicus (Rat).